We begin with the raw amino-acid sequence, 150 residues long: Galectin-2 (150 aa).

A Galectin domain is found at 9-141 (NQVKLQNDFK…FSSPVTVDVH (133 aa)). 5 residues coordinate a carbohydrate: histidine 51, arginine 55, asparagine 64, glutamate 75, and arginine 77.

Homotetramer. Oligomerization is required for carbohydrate binding.

The protein localises to the secreted. It localises to the extracellular space. Its subcellular location is the extracellular matrix. The protein resides in the cell wall. It is found in the endomembrane system. In terms of biological role, binds lactose. May play a role in fruiting body formation. Displays toxicity towards the nematode C.elegans by binding to a specific Gal-beta-1,4-Fuc-alpha-1,6 modification of N-glycan cores on C.elegans intestinal cells. This chain is Galectin-2 (Cgl2), found in Coprinopsis cinerea (Inky cap fungus).